The primary structure comprises 262 residues: Acidic leucine-rich nuclear phosphoprotein 32 family member B (262 aa).

LRR repeat units follow at residues proline 16 to aspartate 40, asparagine 43 to asparagine 64, lysine 65 to threonine 87, and asparagine 89 to lysine 110. An LRRCT domain is found at cysteine 123–glutamate 161. The span at alanine 150–aspartate 233 shows a compositional bias: acidic residues. The interval alanine 150–aspartate 262 is disordered. Positions lysine 240–arginine 243 match the Nuclear localization signal motif. Residues aspartate 247–aspartate 262 are compositionally biased toward acidic residues.

It belongs to the ANP32 family. In terms of assembly, interacts with histones H3 and H4. Interacts with KLF5; this interaction induces promoter region-specific histone incorporation and inhibition of histone acetylation by ANP32B. Directly cleaved by caspase-3/CASP3.

It localises to the nucleus. Its function is as follows. Multifunctional protein that is involved in the regulation of many processes including cell proliferation, apoptosis, cell cycle progression or transcription. Regulates the proliferation of neuronal stem cells, differentiation of leukemic cells and progression from G1 to S phase of the cell cycle. As negative regulator of caspase-3-dependent apoptosis, may act as an antagonist of ANP32A in regulating tissue homeostasis. Exhibits histone chaperone properties, able to recruit histones to certain promoters, thus regulating the transcription of specific genes. Also plays an essential role in the nucleocytoplasmic transport of specific mRNAs via the uncommon nuclear mRNA export receptor XPO1/CRM1. In Gallus gallus (Chicken), this protein is Acidic leucine-rich nuclear phosphoprotein 32 family member B (ANP32B).